A 299-amino-acid polypeptide reads, in one-letter code: Ribosomal RNA small subunit methyltransferase H 1 (299 aa).

Residues 31 to 33 (GGH), D50, F76, D97, and Q104 each bind S-adenosyl-L-methionine.

This sequence belongs to the methyltransferase superfamily. RsmH family.

Its subcellular location is the cytoplasm. It carries out the reaction cytidine(1402) in 16S rRNA + S-adenosyl-L-methionine = N(4)-methylcytidine(1402) in 16S rRNA + S-adenosyl-L-homocysteine + H(+). Specifically methylates the N4 position of cytidine in position 1402 (C1402) of 16S rRNA. This is Ribosomal RNA small subunit methyltransferase H 1 from Acholeplasma laidlawii (strain PG-8A).